Reading from the N-terminus, the 360-residue chain is uncharacterized protein (360 aa).

Residues 19 to 179 (LALGSGGARG…LDPLPMAPIA (161 aa)) enclose the PNPLA domain. The GXSXG signature appears at 50–54 (GSSMG). Ser-52 serves as the catalytic Nucleophile. The active-site Proton acceptor is Asp-166. Residues 166–168 (DGG) carry the DGA/G motif. The segment at 251–282 (DSWSQAPEIEQRPAGPPADREEAADTPGLPKM) is disordered.

This sequence belongs to the NTE family.

This is an uncharacterized protein from Mycobacterium bovis (strain ATCC BAA-935 / AF2122/97).